The primary structure comprises 277 residues: Ribosomal protein L11 methyltransferase (277 aa).

S-adenosyl-L-methionine is bound by residues threonine 130, glycine 151, aspartate 172, and asparagine 213.

Belongs to the methyltransferase superfamily. PrmA family.

The protein localises to the cytoplasm. It catalyses the reaction L-lysyl-[protein] + 3 S-adenosyl-L-methionine = N(6),N(6),N(6)-trimethyl-L-lysyl-[protein] + 3 S-adenosyl-L-homocysteine + 3 H(+). In terms of biological role, methylates ribosomal protein L11. The protein is Ribosomal protein L11 methyltransferase of Campylobacter concisus (strain 13826).